A 245-amino-acid polypeptide reads, in one-letter code: Small ribosomal subunit protein uS3 (245 aa).

The KH type-2 domain occupies Ile38 to Lys106. The segment at Tyr225 to Glu245 is disordered. The segment covering Val233–Glu245 has biased composition (basic residues).

This sequence belongs to the universal ribosomal protein uS3 family. In terms of assembly, part of the 30S ribosomal subunit. Forms a tight complex with proteins S10 and S14.

Binds the lower part of the 30S subunit head. Binds mRNA in the 70S ribosome, positioning it for translation. The chain is Small ribosomal subunit protein uS3 from Azobacteroides pseudotrichonymphae genomovar. CFP2.